Consider the following 212-residue polypeptide: Pyridoxine/pyridoxamine 5'-phosphate oxidase (212 aa).

Residues 9 to 12 (RKSY) and K67 contribute to the substrate site. FMN is bound by residues 62 to 67 (RIVLIK), 77 to 78 (FT), R83, and K84. Positions 124, 128, and 132 each coordinate substrate. FMN contacts are provided by residues 141 to 142 (QS) and W185. 191-193 (RLH) is a substrate binding site. Position 195 (R195) interacts with FMN.

This sequence belongs to the pyridoxamine 5'-phosphate oxidase family. In terms of assembly, homodimer. Requires FMN as cofactor.

The catalysed reaction is pyridoxamine 5'-phosphate + O2 + H2O = pyridoxal 5'-phosphate + H2O2 + NH4(+). It carries out the reaction pyridoxine 5'-phosphate + O2 = pyridoxal 5'-phosphate + H2O2. It functions in the pathway cofactor metabolism; pyridoxal 5'-phosphate salvage; pyridoxal 5'-phosphate from pyridoxamine 5'-phosphate: step 1/1. Its pathway is cofactor metabolism; pyridoxal 5'-phosphate salvage; pyridoxal 5'-phosphate from pyridoxine 5'-phosphate: step 1/1. Catalyzes the oxidation of either pyridoxine 5'-phosphate (PNP) or pyridoxamine 5'-phosphate (PMP) into pyridoxal 5'-phosphate (PLP). In Verminephrobacter eiseniae (strain EF01-2), this protein is Pyridoxine/pyridoxamine 5'-phosphate oxidase.